A 518-amino-acid polypeptide reads, in one-letter code: Cytochrome P450 3A27 (518 aa).

A heme-binding site is contributed by Cys447.

It belongs to the cytochrome P450 family. The cofactor is heme.

It is found in the endoplasmic reticulum membrane. It localises to the microsome membrane. It catalyses the reaction an organic molecule + reduced [NADPH--hemoprotein reductase] + O2 = an alcohol + oxidized [NADPH--hemoprotein reductase] + H2O + H(+). Functionally, cytochromes P450 are a group of heme-thiolate monooxygenases. In liver microsomes, this enzyme is involved in an NADPH-dependent electron transport pathway. It oxidizes a variety of structurally unrelated compounds, including steroids, fatty acids, and xenobiotics. The sequence is that of Cytochrome P450 3A27 (cyp3a27) from Oncorhynchus mykiss (Rainbow trout).